The chain runs to 96 residues: Class I hydrophobin 3 (96 aa).

The signal sequence occupies residues Met1–Ala18. 4 cysteine pairs are disulfide-bonded: Cys43-Cys72, Cys51-Cys66, Cys52-Cys57, and Cys73-Cys92.

This sequence belongs to the fungal hydrophobin family.

It is found in the secreted. The protein localises to the cell wall. Its function is as follows. Aerial growth, conidiation, and dispersal of filamentous fungi in the environment rely upon a capability of their secreting small amphipathic proteins called hydrophobins (HPBs) with low sequence identity. Class I can self-assemble into an outermost layer of rodlet bundles on aerial cell surfaces, conferring cellular hydrophobicity that supports fungal growth, development and dispersal; whereas Class II form highly ordered films at water-air interfaces through intermolecular interactions but contribute nothing to the rodlet structure. Does not seem to be important for the ability to cause seedling disease. This chain is Class I hydrophobin 3, found in Gibberella moniliformis (Maize ear and stalk rot fungus).